We begin with the raw amino-acid sequence, 1553 residues long: MADNSPLIREERQRLFRPYTRAMLTAPSAQPAKENGKTEENKDNSRDKGRGANKDRDGSAHPDQALEQGSRLPARMRNIFPAELASTPLEDFDPFYKNKKTFVVVTKAGDIFRFSGEKSLWMLDPFTPIRRVAISTMVQPIFSYFIMITILIHCIFMIMPATQTTYILELVFLSIYTIEVVVKVLARGFILHPFAYLRDPWNWLDFLVTLIGYITLVVDLGHLYALRAFRVLRSWRTVTIVPGWRTIVDALSLSITSLKDLVLLLLFSLFVFAVLGLQIYMGVLTQKCVKHFPADGSWGNFTDERWFNYTSNSSHWYIPDDWIEYPLCGNSSGAGMCPPGYTCLQGYGGNPNYGYTSFDTFGWAFLSVFRLVTLDYWEDLYQLALRSAGPWHILFFIIVVFYGTFCFLNFILAVVVMSYTHMVKRADEEKAAERELKKEKKAASVANNTANGQEQTTIEMNGDEAVVIDNNDQAARQQSDPETPAPSVTQRLTDFLCVWDCCVPWQKLQGAIGAVVLSPFFELFIAVIIVLNITFMALDHHDMNIEFERILRTGNYIFTSIYIVEAVLKIIALSPKFYFKDSWNVFDFIIVVFAILELGLEGVQGLSVFRSFRLLRVFRLAKFWPTLNNFMSVMTKSYGAFVNVMYVMFLLLFIFAIIGMQLFGMNYIDNMERFPDGDLPRWNFTDFLHSFMIVFRALCGEWIESMWDCMLVGDWSCIPFFVAVFFVGNLVILNLLIALLLNNYGSFCTSPTSDEEDSKDEDALAQIVRIFKRFKPNLNAVKLSPMKPDSEDIVESQEIQGNNIADAEDVLAGEFPPDCCCNAFYKCFPSRPARDSSVQRMWSNIRRVCFLLAKNKYFQKFVTAVLVITSVLLALEDIYLPQRPVLVNITLYVDYVLTAFFVIEMIIMLFAVGFKKYFTSKWYWLDFIVVVAYLLNFVLMCAGIEALQTLRLLRVFRLFRPLSKVNGMQVVTSTLVEAVPHIFNVILVGIFFWLVFAIMGVQLFAGKFYKCVDENSTVLSHEITMDRNDCLHENYTWENSPMNFDHVGNAYLSLLQVATFKGWLQIMNDAIDSREVHKQPIRETNIYMYLYFIFFIVFGSFFILKLFVCILIDIFRQQRRKAEGLSATDSRTQLIYRRAVMRTMSAKPVKRIPKPTCHPQSLMYDISVNRKFEYTMMILIILNVAVMAIDHYGQSMEFSEVLDYLNLIFIIIFFVECVIKVSGLRHHYFKDPWNIIDFLYVVLAIAGLMLSDVIEKYFISPTLLRILRILRVGRLLRYFQSARGMRLLLLALRKALRTLFNVSFLLFVIMFVYAVFGMEFFMHIRDAGAIDDVYNFKTFGQSIILLFQLATSAGWDGVYFAIANEEDCRAPDHELGYPGNCGSRALGIAYLVSYLIITCLVVINMYAAVILDYVLEVYEDSKEGLTDDDYDMFFEVWQQFDPEATQYIRYDQLSELLEALQPPLQVQKPNKYKILSMNIPICKDDHIFYKDVLEALVKDVFSRRGSPVEAGDVQAPNVDEAEYKPVSSTLQRQREEYCVRLIQNAWRKHKQQN.

The tract at residues 1 to 68 is disordered; it reads MADNSPLIRE…SAHPDQALEQ (68 aa). Topologically, residues 1-140 are cytoplasmic; sequence MADNSPLIRE…RVAISTMVQP (140 aa). Positions 34 to 60 are enriched in basic and acidic residues; it reads ENGKTEENKDNSRDKGRGANKDRDGSA. Residues 141–159 traverse the membrane as a helical segment; it reads IFSYFIMITILIHCIFMIM. Residues 160 to 165 lie on the Extracellular side of the membrane; sequence PATQTT. The helical transmembrane segment at 166–186 threads the bilayer; the sequence is YILELVFLSIYTIEVVVKVLA. At 187-200 the chain is on the cytoplasmic side; sequence RGFILHPFAYLRDP. A helical membrane pass occupies residues 201 to 218; the sequence is WNWLDFLVTLIGYITLVV. The Extracellular segment spans residues 219–224; it reads DLGHLY. A helical transmembrane segment spans residues 225-241; sequence ALRAFRVLRSWRTVTIV. The Cytoplasmic segment spans residues 242–260; it reads PGWRTIVDALSLSITSLKD. The chain crosses the membrane as a helical span at residues 261–280; it reads LVLLLLFSLFVFAVLGLQIY. Topologically, residues 281-360 are extracellular; it reads MGVLTQKCVK…PNYGYTSFDT (80 aa). Cystine bridges form between Cys288–Cys337 and Cys328–Cys343. 4 N-linked (GlcNAc...) asparagine glycosylation sites follow: Asn300, Asn308, Asn312, and Asn330. The segment at residues 361–385 is an intramembrane region (pore-forming); it reads FGWAFLSVFRLVTLDYWEDLYQLAL. A saxitoxin-binding site is contributed by Glu378. The Extracellular portion of the chain corresponds to 386 to 392; the sequence is RSAGPWH. A helical transmembrane segment spans residues 393–413; sequence ILFFIIVVFYGTFCFLNFILA. Topologically, residues 414-519 are cytoplasmic; the sequence is VVVMSYTHMV…GAIGAVVLSP (106 aa). Residues 520 to 538 form a helical membrane-spanning segment; that stretch reads FFELFIAVIIVLNITFMAL. Residues 539-549 lie on the Extracellular side of the membrane; the sequence is DHHDMNIEFER. A helical transmembrane segment spans residues 550 to 569; the sequence is ILRTGNYIFTSIYIVEAVLK. The Cytoplasmic portion of the chain corresponds to 570–583; it reads IIALSPKFYFKDSW. Residues 584-603 form a helical membrane-spanning segment; it reads NVFDFIIVVFAILELGLEGV. At 604–605 the chain is on the extracellular side; it reads QG. A helical transmembrane segment spans residues 606 to 623; that stretch reads LSVFRSFRLLRVFRLAKF. The Cytoplasmic portion of the chain corresponds to 624–639; the sequence is WPTLNNFMSVMTKSYG. Residues 640-658 traverse the membrane as a helical segment; the sequence is AFVNVMYVMFLLLFIFAII. Topologically, residues 659 to 686 are extracellular; that stretch reads GMQLFGMNYIDNMERFPDGDLPRWNFTD. The N-linked (GlcNAc...) asparagine glycan is linked to Asn683. Positions 687–707 form an intramembrane region, pore-forming; sequence FLHSFMIVFRALCGEWIESMW. Tetrodotoxin-binding residues include Glu701 and Glu704. Glu704 serves as a coordination point for saxitoxin. Topologically, residues 708-719 are extracellular; the sequence is DCMLVGDWSCIP. Cys709 and Cys717 are oxidised to a cystine. Residues 720–740 traverse the membrane as a helical segment; it reads FFVAVFFVGNLVILNLLIALL. Residues 741–857 lie on the Cytoplasmic side of the membrane; it reads LNNYGSFCTS…VCFLLAKNKY (117 aa). A helical transmembrane segment spans residues 858–875; it reads FQKFVTAVLVITSVLLAL. The Extracellular segment spans residues 876 to 888; that stretch reads EDIYLPQRPVLVN. Residues 889–907 form a helical membrane-spanning segment; it reads ITLYVDYVLTAFFVIEMII. Over 908 to 921 the chain is Cytoplasmic; that stretch reads MLFAVGFKKYFTSK. The helical transmembrane segment at 922–940 threads the bilayer; it reads WYWLDFIVVVAYLLNFVLM. The Extracellular portion of the chain corresponds to 941–945; that stretch reads CAGIE. Residues 946–964 form a helical membrane-spanning segment; the sequence is ALQTLRLLRVFRLFRPLSK. At 965–981 the chain is on the cytoplasmic side; it reads VNGMQVVTSTLVEAVPH. Residues 982-1001 traverse the membrane as a helical segment; sequence IFNVILVGIFFWLVFAIMGV. The Extracellular portion of the chain corresponds to 1002 to 1047; sequence QLFAGKFYKCVDENSTVLSHEITMDRNDCLHENYTWENSPMNFDHV. The cysteines at positions 1011 and 1030 are disulfide-linked. Asn1015 carries an N-linked (GlcNAc...) asparagine glycan. An N-linked (GlcNAc...) asparagine; atypical glycan is attached at Asn1028. A glycan (N-linked (GlcNAc...) asparagine) is linked at Asn1034. Residues 1048 to 1069 constitute an intramembrane region (pore-forming); the sequence is GNAYLSLLQVATFKGWLQIMND. Gly1062 provides a ligand contact to tetrodotoxin. Trp1063 is a binding site for saxitoxin. The Extracellular segment spans residues 1070–1086; sequence AIDSREVHKQPIRETNI. A helical membrane pass occupies residues 1087–1108; sequence YMYLYFIFFIVFGSFFILKLFV. At 1109–1171 the chain is on the cytoplasmic side; sequence CILIDIFRQQ…LMYDISVNRK (63 aa). Positions 1133–1146 are linker region that may regulate channel inactivation; that stretch reads QLIYRRAVMRTMSA. Residues 1172–1189 form a helical membrane-spanning segment; the sequence is FEYTMMILIILNVAVMAI. Residues 1190–1200 are Extracellular-facing; that stretch reads DHYGQSMEFSE. Residues 1201 to 1219 traverse the membrane as a helical segment; sequence VLDYLNLIFIIIFFVECVI. Residues 1220-1231 lie on the Cytoplasmic side of the membrane; the sequence is KVSGLRHHYFKD. Residues 1232–1249 traverse the membrane as a helical segment; it reads PWNIIDFLYVVLAIAGLM. Topologically, residues 1250–1262 are extracellular; that stretch reads LSDVIEKYFISPT. A helical membrane pass occupies residues 1263–1279; sequence LLRILRILRVGRLLRYF. Topologically, residues 1280–1298 are cytoplasmic; sequence QSARGMRLLLLALRKALRT. A helical membrane pass occupies residues 1299–1316; the sequence is LFNVSFLLFVIMFVYAVF. Topologically, residues 1317 to 1338 are extracellular; the sequence is GMEFFMHIRDAGAIDDVYNFKT. Residues 1339–1361 constitute an intramembrane region (pore-forming); it reads FGQSIILLFQLATSAGWDGVYFA. Tetrodotoxin is bound by residues Gly1354 and Asp1356. Position 1356 (Asp1356) interacts with saxitoxin. Over 1362–1387 the chain is Extracellular; it reads IANEEDCRAPDHELGYPGNCGSRALG. Cysteines 1368 and 1381 form a disulfide. The helical transmembrane segment at 1388-1410 threads the bilayer; that stretch reads IAYLVSYLIITCLVVINMYAAVI. Over 1411 to 1553 the chain is Cytoplasmic; it reads LDYVLEVYED…NAWRKHKQQN (143 aa).

The protein belongs to the sodium channel (TC 1.A.1.10) family. In terms of tissue distribution, detected in adult nerve cord, muscle, gut and mushroom-shaped accessory glands.

The protein resides in the cell membrane. Inhibited by the pore blockers saxitoxin and tetrodotoxin. Mediates the voltage-dependent sodium ion permeability of excitable membranes. The chain is Sodium channel protein PaFPC1 from Periplaneta americana (American cockroach).